Consider the following 798-residue polypeptide: Type 2 DNA topoisomerase 6 subunit B (798 aa).

Residues Asn60, Asp91, 112–113 (SR), and 122–129 (GQQGIGIS) each bind ATP. Basic and acidic residues predominate over residues 221–233 (EPEDSFKSERATE). Residues 221–245 (EPEDSFKSERATEELPPETEEIRPH) form a disordered region. ATP is bound at residue Lys629.

This sequence belongs to the TOP6B family. As to quaternary structure, homodimer. Heterotetramer of two Top6A and two Top6B chains.

The enzyme catalyses ATP-dependent breakage, passage and rejoining of double-stranded DNA.. In terms of biological role, relaxes both positive and negative superturns and exhibits a strong decatenase activity. This chain is Type 2 DNA topoisomerase 6 subunit B, found in Natronomonas pharaonis (strain ATCC 35678 / DSM 2160 / CIP 103997 / JCM 8858 / NBRC 14720 / NCIMB 2260 / Gabara) (Halobacterium pharaonis).